The primary structure comprises 436 residues: Trigger factor (436 aa).

Residues E161–P246 enclose the PPIase FKBP-type domain.

It belongs to the FKBP-type PPIase family. Tig subfamily.

It localises to the cytoplasm. The enzyme catalyses [protein]-peptidylproline (omega=180) = [protein]-peptidylproline (omega=0). Functionally, involved in protein export. Acts as a chaperone by maintaining the newly synthesized protein in an open conformation. Functions as a peptidyl-prolyl cis-trans isomerase. The polypeptide is Trigger factor (Pseudomonas syringae pv. syringae (strain B728a)).